The following is a 414-amino-acid chain: Histidine--tRNA ligase (414 aa).

It belongs to the class-II aminoacyl-tRNA synthetase family. As to quaternary structure, homodimer.

The protein resides in the cytoplasm. The catalysed reaction is tRNA(His) + L-histidine + ATP = L-histidyl-tRNA(His) + AMP + diphosphate + H(+). This chain is Histidine--tRNA ligase, found in Endomicrobium trichonymphae.